A 440-amino-acid chain; its full sequence is MEWQQLLSRKRLGKQQLEEHQFERTSFLKDYDRIVYSTAFRRLKDKTQVFPLSKNADVRTRLIHSLEVSCVGRSLGRMVGDQIIKRHQLQAIEAADFGDILSAACLAHDIGNPPFGHAGEDAIQTAFQKWYARKNRSGALINPLEKADFDRFEGNAQGFRILTRLGLPHRPGGLQLTCATLATFAKYPRESFIPQRTLARHPGKSLQKYGFFQAEKDLFTEVAETVGLIGRSPKVAWWCRHPLTFLMEAADDLCYSIVDLEDGFHMGYLPFAAVQDKLQSIADIDLNQYEGSPAETIKRLRAKAINRLVKEVAQLFLDHEPDILAGKFDQSLVELSRFSPQLKEIETMTTNAVFHHPNVVRIKIAGFEVLGDLLTDFLTSVLEKQPRPKGKLLKFMLPPEHQIAPDEDNYSKILKVTDYIAGMTDLQATLLYQQLRGISL.

The HD domain maps to 61–256; sequence RLIHSLEVSC…MEAADDLCYS (196 aa).

The protein belongs to the dGTPase family. Type 3 subfamily.

The sequence is that of Deoxyguanosinetriphosphate triphosphohydrolase-like protein from Synechocystis sp. (strain ATCC 27184 / PCC 6803 / Kazusa).